A 465-amino-acid polypeptide reads, in one-letter code: Cysteine--tRNA ligase (465 aa).

Cys29 serves as a coordination point for Zn(2+). Residues 31-41 carry the 'HIGH' region motif; that stretch reads ITPYDEVHLGH. Zn(2+)-binding residues include Cys212, His237, and Glu241. Positions 269-273 match the 'KMSKS' region motif; sequence KMSKS. Lys272 provides a ligand contact to ATP.

Belongs to the class-I aminoacyl-tRNA synthetase family. In terms of assembly, monomer. Requires Zn(2+) as cofactor.

It localises to the cytoplasm. It carries out the reaction tRNA(Cys) + L-cysteine + ATP = L-cysteinyl-tRNA(Cys) + AMP + diphosphate. In Endomicrobium trichonymphae, this protein is Cysteine--tRNA ligase.